The primary structure comprises 826 residues: Putative pentatricopeptide repeat-containing protein At1g13630 (826 aa).

PPR repeat units follow at residues 228 to 262, 263 to 297, 298 to 332, 333 to 367, 368 to 402, 404 to 438, 439 to 473, 474 to 508, 509 to 543, 544 to 578, 579 to 613, 614 to 648, 661 to 695, 696 to 730, 731 to 765, and 766 to 800; these read NEHTYSTVVDGLCRQQKLEDAVLFLRTSEWKDIGP, SVVSFNSIMSGYCKLGFVDMAKSFFCTVLKCGLVP, SVYSHNILINGLCLVGSIAEALELASDMNKHGVEP, DSVTYNILAKGFHLLGMISGAWEVIRDMLDKGLSP, DVITYTILLCGQCQLGNIDMGLVLLKDMLSRGFEL, SIIPCSVMLSGLCKTGRIDEALSLFNQMKADGLSP, DLVAYSIVIHGLCKLGKFDMALWLYDEMCDKRILP, NSRTHGALLLGLCQKGMLLEARSLLDSLISSGETL, DIVLYNIVIDGYAKSGCIEEALELFKVVIETGITP, SVATFNSLIYGYCKTQNIAEARKILDVIKLYGLAP, SVVSYTTLMDAYANCGNTKSIDELRREMKAEGIPP, TNVTYSVIFKGLCRGWKHENCNHVLRERIFEKCKQ, DQITYNTIIQYLCRVKHLSGAFVFLEIMKSRNLDA, SSATYNILIDSLCVYGYIRKADSFIYSLQEQNVSL, SKFAYTTLIKAHCVKGDPEMAVKLFHQLLHRGFNV, and SIRDYSAVINRLCRRHLVNESKFFFCLMLSQGISP.

The protein belongs to the PPR family. P subfamily.

The sequence is that of Putative pentatricopeptide repeat-containing protein At1g13630 from Arabidopsis thaliana (Mouse-ear cress).